A 971-amino-acid polypeptide reads, in one-letter code: Isoleucine--tRNA ligase (971 aa).

A 'HIGH' region motif is present at residues 64 to 74 (PYANGHIHIGH). Glu-602 serves as a coordination point for L-isoleucyl-5'-AMP. Positions 643–647 (KMSKS) match the 'KMSKS' region motif. Lys-646 is a binding site for ATP.

This sequence belongs to the class-I aminoacyl-tRNA synthetase family. IleS type 1 subfamily. Monomer.

The protein resides in the cytoplasm. The enzyme catalyses tRNA(Ile) + L-isoleucine + ATP = L-isoleucyl-tRNA(Ile) + AMP + diphosphate. Catalyzes the attachment of isoleucine to tRNA(Ile). As IleRS can inadvertently accommodate and process structurally similar amino acids such as valine, to avoid such errors it has two additional distinct tRNA(Ile)-dependent editing activities. One activity is designated as 'pretransfer' editing and involves the hydrolysis of activated Val-AMP. The other activity is designated 'posttransfer' editing and involves deacylation of mischarged Val-tRNA(Ile). The chain is Isoleucine--tRNA ligase from Bartonella quintana (strain Toulouse) (Rochalimaea quintana).